The sequence spans 289 residues: 4-hydroxy-3-methylbut-2-enyl diphosphate reductase (289 aa).

Cys13 contacts [4Fe-4S] cluster. (2E)-4-hydroxy-3-methylbut-2-enyl diphosphate contacts are provided by His42 and His76. Residues His42 and His76 each contribute to the dimethylallyl diphosphate site. 2 residues coordinate isopentenyl diphosphate: His42 and His76. Cys98 lines the [4Fe-4S] cluster pocket. His130 provides a ligand contact to (2E)-4-hydroxy-3-methylbut-2-enyl diphosphate. His130 contributes to the dimethylallyl diphosphate binding site. His130 contributes to the isopentenyl diphosphate binding site. Glu132 acts as the Proton donor in catalysis. Residue Thr168 participates in (2E)-4-hydroxy-3-methylbut-2-enyl diphosphate binding. Cys199 is a binding site for [4Fe-4S] cluster. (2E)-4-hydroxy-3-methylbut-2-enyl diphosphate contacts are provided by Ser227, Ser228, Asn229, and Ser272. Residues Ser227, Ser228, Asn229, and Ser272 each contribute to the dimethylallyl diphosphate site. Residues Ser227, Ser228, Asn229, and Ser272 each coordinate isopentenyl diphosphate.

The protein belongs to the IspH family. It depends on [4Fe-4S] cluster as a cofactor.

The enzyme catalyses isopentenyl diphosphate + 2 oxidized [2Fe-2S]-[ferredoxin] + H2O = (2E)-4-hydroxy-3-methylbut-2-enyl diphosphate + 2 reduced [2Fe-2S]-[ferredoxin] + 2 H(+). It catalyses the reaction dimethylallyl diphosphate + 2 oxidized [2Fe-2S]-[ferredoxin] + H2O = (2E)-4-hydroxy-3-methylbut-2-enyl diphosphate + 2 reduced [2Fe-2S]-[ferredoxin] + 2 H(+). It functions in the pathway isoprenoid biosynthesis; dimethylallyl diphosphate biosynthesis; dimethylallyl diphosphate from (2E)-4-hydroxy-3-methylbutenyl diphosphate: step 1/1. It participates in isoprenoid biosynthesis; isopentenyl diphosphate biosynthesis via DXP pathway; isopentenyl diphosphate from 1-deoxy-D-xylulose 5-phosphate: step 6/6. Functionally, catalyzes the conversion of 1-hydroxy-2-methyl-2-(E)-butenyl 4-diphosphate (HMBPP) into a mixture of isopentenyl diphosphate (IPP) and dimethylallyl diphosphate (DMAPP). Acts in the terminal step of the DOXP/MEP pathway for isoprenoid precursor biosynthesis. The protein is 4-hydroxy-3-methylbut-2-enyl diphosphate reductase of Porphyromonas gingivalis (strain ATCC BAA-308 / W83).